The following is a 562-amino-acid chain: Arginine--tRNA ligase 1 (562 aa).

The short motif at 122–132 (PNIAKPFSMGH) is the 'HIGH' region element.

This sequence belongs to the class-I aminoacyl-tRNA synthetase family. In terms of assembly, monomer.

The protein resides in the cytoplasm. The catalysed reaction is tRNA(Arg) + L-arginine + ATP = L-arginyl-tRNA(Arg) + AMP + diphosphate. This is Arginine--tRNA ligase 1 from Bacillus cereus (strain ZK / E33L).